The sequence spans 507 residues: Aldehyde dehydrogenase 1, mitochondrial (507 aa).

Residues 1–21 (MLATRNLVPIIRASIKWRIKL) constitute a mitochondrion transit peptide. Residue 266 to 271 (GSTLVG) coordinates NAD(+). Residues E289 and C323 contribute to the active site.

The protein belongs to the aldehyde dehydrogenase family. As to quaternary structure, homotetramer.

Its subcellular location is the mitochondrion matrix. The enzyme catalyses an aldehyde + NAD(+) + H2O = a carboxylate + NADH + 2 H(+). The protein operates within alcohol metabolism; ethanol degradation; acetate from ethanol: step 2/2. In Saccharomyces cerevisiae (Baker's yeast), this protein is Aldehyde dehydrogenase 1, mitochondrial (ALD1).